A 514-amino-acid chain; its full sequence is Sugar transport protein 4 (514 aa).

Residues 1–22 lie on the Cytoplasmic side of the membrane; the sequence is MAGGFVSQTPGVRNYNYKLTPK. A run of 12 helical transmembrane segments spans residues 23–43, 80–100, 117–137, 140–160, 172–192, 202–222, 283–303, 321–341, 348–368, 387–407, 426–446, and 451–471; these read VFVTCFIGAFGGLIFGYDLGI, LLTLFTSSLYVAALVSSLFAS, FTFFIGSAFNGFAQNIAMLLI, ILLGFGVGFANQSVPVYLSEM, GFQVAIIFGIVVATIINYFTA, ISLGLACVPAVMIMIGALILP, LIMTCFIPFFQQLTGINVITF, LSAMVTGIIELLCTFVSVFTV, ILFLQGGIQMLVSQIAIGAMI, LIVALICIYVAGFAWSWGPLG, INVSVNMFFTFLVAQLFLTML, and FGLFFFFAFFVVIMTIFIYLM. The Cytoplasmic segment spans residues 472–514; that stretch reads LPETKNVPIEEMNRVWKAHWFWGKFIPDEAVNMGAAEMQQKSV.

The protein belongs to the major facilitator superfamily. Sugar transporter (TC 2.A.1.1) family. In terms of tissue distribution, mostly in flowers and roots, especially in anthers, including pollen, and root tips. Also present in some hydathodes.

Its subcellular location is the cell membrane. Mediates an active uptake of hexoses, probably by sugar/hydrogen symport. Can transport glucose, methylglucose, galactose, xylose and mannose, but not fructose. This is Sugar transport protein 4 (STP4) from Arabidopsis thaliana (Mouse-ear cress).